Here is a 111-residue protein sequence, read N- to C-terminus: MSSHQNFLTPPPDHSKAILAVAVGVGLAIVLHFSLSYKLPSPGDNIHSLPFGGTYRDGTKSIIYNSPHRGPGQSGALPIITVFAIIECTLHVLRKRDNPVRPQHSDCPNCS.

The Cytoplasmic portion of the chain corresponds to 1–16 (MSSHQNFLTPPPDHSK). A helical transmembrane segment spans residues 17-37 (AILAVAVGVGLAIVLHFSLSY). Over 38–72 (KLPSPGDNIHSLPFGGTYRDGTKSIIYNSPHRGPG) the chain is Lumenal. Residues 73-93 (QSGALPIITVFAIIECTLHVL) form a helical membrane-spanning segment. Topologically, residues 94–111 (RKRDNPVRPQHSDCPNCS) are cytoplasmic.

This sequence belongs to the Tymovirales TGBp2 protein family.

It localises to the host endoplasmic reticulum membrane. Functionally, plays a role in viral cell-to-cell propagation, by facilitating genome transport to neighboring plant cells through plasmosdesmata,. The sequence is that of Movement protein TGB2 from Carica papaya (Papaya).